A 192-amino-acid chain; its full sequence is ATP synthase protein MI25 (192 aa).

A helical transmembrane segment spans residues 29-49; it reads ILIYNEEMIVALCFIGFIIFS.

The protein belongs to the ATPase protein MI25 family. As to quaternary structure, F-type ATPases have 2 components, CF(1) - the catalytic core - and CF(0) - the membrane proton channel. CF(1) has five subunits: alpha(3), beta(3), gamma(1), delta(1), epsilon(1). CF(0) has three main subunits: a, b and c.

The protein localises to the mitochondrion membrane. Functionally, this is one of the chains of the nonenzymatic component (CF(0) subunit) of the mitochondrial ATPase complex. This Arabidopsis thaliana (Mouse-ear cress) protein is ATP synthase protein MI25 (ATP4).